Consider the following 54-residue polypeptide: Photoreceptor disk component PRCD (54 aa).

C2 is lipidated: S-palmitoyl cysteine. The tract at residues 24–54 is disordered; that stretch reads QPEPSGADGAVVGSRSERDLQSSGRKEEPLK. The span at 38 to 54 shows a compositional bias: basic and acidic residues; sequence RSERDLQSSGRKEEPLK.

This sequence belongs to the PRCD family. Interacts with RHO/rhodopsin; the interaction promotes PRCD stability. Post-translationally, palmitoylated at Cys-2. Palmitoylation is essential for protein stability and trafficking to the photoreceptor outer segment, but does not appear to be essential for membrane localization. Probably palmitoylated by ZDHHC3. Phosphorylated. In terms of tissue distribution, expressed in retina.

The protein resides in the cell projection. It is found in the cilium. Its subcellular location is the photoreceptor outer segment. It localises to the membrane. The protein localises to the endoplasmic reticulum. The protein resides in the golgi apparatus. Involved in vision. This Canis lupus familiaris (Dog) protein is Photoreceptor disk component PRCD.